A 276-amino-acid polypeptide reads, in one-letter code: Diaminopimelate epimerase (276 aa).

3 residues coordinate substrate: Asn13, Gln46, and Asn66. Cys75 functions as the Proton donor in the catalytic mechanism. Substrate contacts are provided by residues 76–77 (GN), Asn159, Asn192, and 210–211 (ER). Cys219 functions as the Proton acceptor in the catalytic mechanism. 220 to 221 (GT) provides a ligand contact to substrate.

It belongs to the diaminopimelate epimerase family. In terms of assembly, homodimer.

It is found in the cytoplasm. The enzyme catalyses (2S,6S)-2,6-diaminopimelate = meso-2,6-diaminopimelate. Its pathway is amino-acid biosynthesis; L-lysine biosynthesis via DAP pathway; DL-2,6-diaminopimelate from LL-2,6-diaminopimelate: step 1/1. In terms of biological role, catalyzes the stereoinversion of LL-2,6-diaminopimelate (L,L-DAP) to meso-diaminopimelate (meso-DAP), a precursor of L-lysine and an essential component of the bacterial peptidoglycan. The protein is Diaminopimelate epimerase of Pseudomonas syringae pv. syringae (strain B728a).